Here is a 440-residue protein sequence, read N- to C-terminus: Trigger factor (440 aa).

The PPIase FKBP-type domain maps to 163-248 (GDILTVDFLG…AKALKRRVAP (86 aa)).

Belongs to the FKBP-type PPIase family. Tig subfamily.

The protein resides in the cytoplasm. It carries out the reaction [protein]-peptidylproline (omega=180) = [protein]-peptidylproline (omega=0). Its function is as follows. Involved in protein export. Acts as a chaperone by maintaining the newly synthesized protein in an open conformation. Functions as a peptidyl-prolyl cis-trans isomerase. The chain is Trigger factor from Acidiphilium cryptum (strain JF-5).